A 116-amino-acid polypeptide reads, in one-letter code: Iron-sulfur cluster insertion protein ErpA (116 aa).

Iron-sulfur cluster is bound by residues Cys44, Cys108, and Cys110.

It belongs to the HesB/IscA family. In terms of assembly, homodimer. The cofactor is iron-sulfur cluster.

In terms of biological role, required for insertion of 4Fe-4S clusters for at least IspG. This chain is Iron-sulfur cluster insertion protein ErpA, found in Francisella tularensis subsp. mediasiatica (strain FSC147).